A 304-amino-acid chain; its full sequence is Sulfate adenylyltransferase subunit 2 (304 aa).

It belongs to the PAPS reductase family. CysD subfamily. As to quaternary structure, heterodimer composed of CysD, the smaller subunit, and CysN.

It carries out the reaction sulfate + ATP + H(+) = adenosine 5'-phosphosulfate + diphosphate. Its pathway is sulfur metabolism; hydrogen sulfide biosynthesis; sulfite from sulfate: step 1/3. With CysN forms the ATP sulfurylase (ATPS) that catalyzes the adenylation of sulfate producing adenosine 5'-phosphosulfate (APS) and diphosphate, the first enzymatic step in sulfur assimilation pathway. APS synthesis involves the formation of a high-energy phosphoric-sulfuric acid anhydride bond driven by GTP hydrolysis by CysN coupled to ATP hydrolysis by CysD. This Acinetobacter baumannii (strain SDF) protein is Sulfate adenylyltransferase subunit 2.